Here is a 198-residue protein sequence, read N- to C-terminus: uncharacterized protein (198 aa).

Residues 1 to 28 (MHPTQRKLMKRIILFLSLLFCIACPAIA) form the signal peptide.

The protein belongs to the fimbrial protein family.

It localises to the fimbrium. Functionally, part of the yadCKLM-htrE-yadVN fimbrial operon. Could contribute to adhesion to various surfaces in specific environmental niches. This is an uncharacterized protein from Escherichia coli (strain K12).